We begin with the raw amino-acid sequence, 339 residues long: Deoxyguanosinetriphosphate triphosphohydrolase-like protein (339 aa).

An HD domain is found at 75 to 186 (RLTHTLEVAQ…VQISDKIAYI (112 aa)).

It belongs to the dGTPase family. Type 2 subfamily.

This is Deoxyguanosinetriphosphate triphosphohydrolase-like protein from Caldanaerobacter subterraneus subsp. tengcongensis (strain DSM 15242 / JCM 11007 / NBRC 100824 / MB4) (Thermoanaerobacter tengcongensis).